The chain runs to 328 residues: Methionyl-tRNA formyltransferase (328 aa).

110–113 (SNLP) provides a ligand contact to (6S)-5,6,7,8-tetrahydrofolate.

Belongs to the Fmt family.

The catalysed reaction is L-methionyl-tRNA(fMet) + (6R)-10-formyltetrahydrofolate = N-formyl-L-methionyl-tRNA(fMet) + (6S)-5,6,7,8-tetrahydrofolate + H(+). Its function is as follows. Attaches a formyl group to the free amino group of methionyl-tRNA(fMet). The formyl group appears to play a dual role in the initiator identity of N-formylmethionyl-tRNA by promoting its recognition by IF2 and preventing the misappropriation of this tRNA by the elongation apparatus. In Bifidobacterium longum (strain DJO10A), this protein is Methionyl-tRNA formyltransferase.